The following is a 106-amino-acid chain: Nucleoid-associated protein Smlt1015 (106 aa).

The segment at isoleucine 81 to phenylalanine 106 is disordered.

The protein belongs to the YbaB/EbfC family. In terms of assembly, homodimer.

The protein resides in the cytoplasm. The protein localises to the nucleoid. Its function is as follows. Binds to DNA and alters its conformation. May be involved in regulation of gene expression, nucleoid organization and DNA protection. The protein is Nucleoid-associated protein Smlt1015 of Stenotrophomonas maltophilia (strain K279a).